We begin with the raw amino-acid sequence, 361 residues long: Phosphate acyltransferase (361 aa).

Belongs to the PlsX family. In terms of assembly, homodimer. Probably interacts with PlsY.

The protein resides in the cytoplasm. It catalyses the reaction a fatty acyl-[ACP] + phosphate = an acyl phosphate + holo-[ACP]. The protein operates within lipid metabolism; phospholipid metabolism. Its function is as follows. Catalyzes the reversible formation of acyl-phosphate (acyl-PO(4)) from acyl-[acyl-carrier-protein] (acyl-ACP). This enzyme utilizes acyl-ACP as fatty acyl donor, but not acyl-CoA. This is Phosphate acyltransferase from Parvibaculum lavamentivorans (strain DS-1 / DSM 13023 / NCIMB 13966).